Here is a 426-residue protein sequence, read N- to C-terminus: Serine--tRNA ligase (426 aa).

The interval Lys36–Glu66 is disordered. Residues Asp46 to Ser55 show a composition bias toward polar residues. Thr233 to Glu235 is an L-serine binding site. Residue Arg264–Glu266 coordinates ATP. Glu287 is an L-serine binding site. An ATP-binding site is contributed by Glu351–Ser354. Ser387 contacts L-serine.

This sequence belongs to the class-II aminoacyl-tRNA synthetase family. Type-1 seryl-tRNA synthetase subfamily. As to quaternary structure, homodimer. The tRNA molecule binds across the dimer.

It localises to the cytoplasm. The catalysed reaction is tRNA(Ser) + L-serine + ATP = L-seryl-tRNA(Ser) + AMP + diphosphate + H(+). The enzyme catalyses tRNA(Sec) + L-serine + ATP = L-seryl-tRNA(Sec) + AMP + diphosphate + H(+). It functions in the pathway aminoacyl-tRNA biosynthesis; selenocysteinyl-tRNA(Sec) biosynthesis; L-seryl-tRNA(Sec) from L-serine and tRNA(Sec): step 1/1. Functionally, catalyzes the attachment of serine to tRNA(Ser). Is also able to aminoacylate tRNA(Sec) with serine, to form the misacylated tRNA L-seryl-tRNA(Sec), which will be further converted into selenocysteinyl-tRNA(Sec). In Francisella tularensis subsp. holarctica (strain FTNF002-00 / FTA), this protein is Serine--tRNA ligase.